Reading from the N-terminus, the 185-residue chain is Ribosome-recycling factor (185 aa).

It belongs to the RRF family.

It localises to the cytoplasm. In terms of biological role, responsible for the release of ribosomes from messenger RNA at the termination of protein biosynthesis. May increase the efficiency of translation by recycling ribosomes from one round of translation to another. This chain is Ribosome-recycling factor, found in Frankia alni (strain DSM 45986 / CECT 9034 / ACN14a).